The chain runs to 287 residues: Intermediate filament family orphan 2 (287 aa).

An IF rod domain is found at 1 to 254 (MNLQTMVDTL…RLIKGSADRN (254 aa)). The segment at 248–287 (KGSADRNSPSPSSVASSDSGSTDEIQDDLEREADVEPMVS) is disordered. Positions 255–267 (SPSPSSVASSDSG) are enriched in low complexity. Acidic residues predominate over residues 271-287 (EIQDDLEREADVEPMVS).

This sequence belongs to the intermediate filament family.

This Rattus norvegicus (Rat) protein is Intermediate filament family orphan 2 (Iffo2).